The chain runs to 217 residues: PRA1 family protein B3 (217 aa).

Residues 1-24 (MMANPPTLPISDHSGGGSQSQQPV) form a disordered region. A run of 5 helical transmembrane segments spans residues 76–96 (LPYF…LSLL), 98–118 (HPFS…LYLF), 138–158 (LGVL…GSLL), 162–182 (LMIG…EDLF), and 193–213 (LLSF…STPA).

Belongs to the PRA1 family. As to quaternary structure, interacts with PRA1B1, PRA1B2, PRA1B4, PRA1B5, PRA1B6 and PRA1E. Expressed in hypocotyls and shoot apex.

The protein resides in the endosome membrane. Its function is as follows. May be involved in both secretory and endocytic intracellular trafficking in the endosomal/prevacuolar compartments. The polypeptide is PRA1 family protein B3 (PRA1B3) (Arabidopsis thaliana (Mouse-ear cress)).